Here is a 119-residue protein sequence, read N- to C-terminus: Protein TusC (119 aa).

This sequence belongs to the DsrF/TusC family. In terms of assembly, heterohexamer, formed by a dimer of trimers. The hexameric TusBCD complex contains 2 copies each of TusB, TusC and TusD. The TusBCD complex interacts with TusE.

It localises to the cytoplasm. Functionally, part of a sulfur-relay system required for 2-thiolation of 5-methylaminomethyl-2-thiouridine (mnm(5)s(2)U) at tRNA wobble positions. The sequence is that of Protein TusC from Citrobacter koseri (strain ATCC BAA-895 / CDC 4225-83 / SGSC4696).